The chain runs to 463 residues: 23S rRNA (uracil(1939)-C(5))-methyltransferase RlmD (463 aa).

The TRAM domain maps to 14–78; sequence AVAPGSDPVV…PSYEQAHLLE (65 aa). [4Fe-4S] cluster contacts are provided by Cys-91, Cys-97, Cys-100, and Cys-179. S-adenosyl-L-methionine contacts are provided by Gln-287, Phe-316, Asn-321, Glu-337, Asn-365, and Asp-386. The Nucleophile role is filled by Cys-419.

It belongs to the class I-like SAM-binding methyltransferase superfamily. RNA M5U methyltransferase family. RlmD subfamily.

It carries out the reaction uridine(1939) in 23S rRNA + S-adenosyl-L-methionine = 5-methyluridine(1939) in 23S rRNA + S-adenosyl-L-homocysteine + H(+). Catalyzes the formation of 5-methyl-uridine at position 1939 (m5U1939) in 23S rRNA. The polypeptide is 23S rRNA (uracil(1939)-C(5))-methyltransferase RlmD (Cupriavidus pinatubonensis (strain JMP 134 / LMG 1197) (Cupriavidus necator (strain JMP 134))).